Consider the following 60-residue polypeptide: Chromatin protein Cren7 (60 aa).

This sequence belongs to the Cren7 family. As to quaternary structure, monomer. In terms of processing, methylated at multiple sites, to varying extents.

It is found in the chromosome. It localises to the cytoplasm. In terms of biological role, a chromatin protein, binds double-stranded DNA without sequence specificity. Constrains negative DNA supercoils. This Saccharolobus islandicus (strain M.16.4 / Kamchatka #3) (Sulfolobus islandicus) protein is Chromatin protein Cren7.